The chain runs to 319 residues: Biotin synthase (319 aa).

Residues 44-273 (IHGDGIDLCS…EAKIRLAGGR (230 aa)) form the Radical SAM core domain. Positions 62, 66, and 69 each coordinate [4Fe-4S] cluster. Residues Ser-106, Cys-138, Cys-198, and Arg-268 each contribute to the [2Fe-2S] cluster site.

This sequence belongs to the radical SAM superfamily. Biotin synthase family. In terms of assembly, homodimer. [4Fe-4S] cluster serves as cofactor. It depends on [2Fe-2S] cluster as a cofactor.

It carries out the reaction (4R,5S)-dethiobiotin + (sulfur carrier)-SH + 2 reduced [2Fe-2S]-[ferredoxin] + 2 S-adenosyl-L-methionine = (sulfur carrier)-H + biotin + 2 5'-deoxyadenosine + 2 L-methionine + 2 oxidized [2Fe-2S]-[ferredoxin]. It functions in the pathway cofactor biosynthesis; biotin biosynthesis; biotin from 7,8-diaminononanoate: step 2/2. In terms of biological role, catalyzes the conversion of dethiobiotin (DTB) to biotin by the insertion of a sulfur atom into dethiobiotin via a radical-based mechanism. The sequence is that of Biotin synthase from Clostridium perfringens (strain ATCC 13124 / DSM 756 / JCM 1290 / NCIMB 6125 / NCTC 8237 / Type A).